The following is a 438-amino-acid chain: MAMLPQEVIRKKRDGGRLVPAEIAGFIEGLADGSISEGQAAAFAMAVWFSGMSRDECVALTLAMRDSGETLDWGEFGRPVVDKHSTGGVGDNVSLMLAPIVAACGPVVPMISGRGLGHTGGTLDKLESIPGYNIQPSPELFRRVVDEVGCAIIGQTANLAPADKRLYAIRDVTATVDSVPLITASILSKKLAAGLQSLVLDVKLGNGSFMTDPAETEILARSLVEVANGAGVRTSALITDMNEPLADAAGNALEVENCLAYLSGKKAGTRLDRVVMAFAAEMLAAAGVSAHKAEGEAMARRALESGEALERFGLMVHRLGGPADFVERPEAYLERAPAIVPVAAARDGYLAACETRELGMAVIALGGGRRRPDDRIDHRVGLAGLRPLRTKVEKGEPIAFVHGADRDQAEAVAKRVATLYAIAEEAPAQRPVIASRLV.

Belongs to the thymidine/pyrimidine-nucleoside phosphorylase family. Homodimer.

The catalysed reaction is thymidine + phosphate = 2-deoxy-alpha-D-ribose 1-phosphate + thymine. It functions in the pathway pyrimidine metabolism; dTMP biosynthesis via salvage pathway; dTMP from thymine: step 1/2. The enzymes which catalyze the reversible phosphorolysis of pyrimidine nucleosides are involved in the degradation of these compounds and in their utilization as carbon and energy sources, or in the rescue of pyrimidine bases for nucleotide synthesis. In Sinorhizobium medicae (strain WSM419) (Ensifer medicae), this protein is Thymidine phosphorylase.